The sequence spans 506 residues: RNA-splicing ligase RtcB homolog (506 aa).

Residues aspartate 120, cysteine 123, histidine 228, histidine 260, and histidine 354 each coordinate Mn(2+). 227 to 231 (NHYAE) lines the GMP pocket. GMP contacts are provided by residues 354-355 (HN), 403-406 (GGSM), serine 410, 429-432 (HGAG), and lysine 505. Histidine 429 functions as the GMP-histidine intermediate in the catalytic mechanism.

It belongs to the RtcB family. Catalytic component of the tRNA-splicing ligase complex. Requires Mn(2+) as cofactor.

It catalyses the reaction a 3'-end 3'-phospho-ribonucleotide-RNA + a 5'-end dephospho-ribonucleoside-RNA + GTP = a ribonucleotidyl-ribonucleotide-RNA + GMP + diphosphate. The enzyme catalyses a 3'-end 2',3'-cyclophospho-ribonucleotide-RNA + a 5'-end dephospho-ribonucleoside-RNA + GTP + H2O = a ribonucleotidyl-ribonucleotide-RNA + GMP + diphosphate + H(+). Catalytic subunit of the tRNA-splicing ligase complex that acts by directly joining spliced tRNA halves to mature-sized tRNAs by incorporating the precursor-derived splice junction phosphate into the mature tRNA as a canonical 3',5'-phosphodiester. May act as an RNA ligase with broad substrate specificity, and may function toward other RNAs. In Aedes aegypti (Yellowfever mosquito), this protein is RNA-splicing ligase RtcB homolog.